The sequence spans 742 residues: mRNA export factor ICP27 homolog (742 aa).

Basic and acidic residues predominate over residues 1-11 (MELHSRGRHDA). Residues 1 to 202 (MELHSRGRHD…NHHGSSAGPQ (202 aa)) are disordered. The span at 72-85 (SHHHRPCVPARRPR) shows a compositional bias: basic residues. A compositionally biased stretch (basic and acidic residues) spans 153–171 (KSYDNDDGEPHHHGGDSTH). Positions 179–202 (CPTTFGSSHPSSANNHHGSSAGPQ) are enriched in polar residues. Residues cysteine 387, histidine 494, cysteine 496, and cysteine 501 each contribute to the Zn(2+) site. The CHC2-type zinc-finger motif lies at 387–501 (CILDHQDGWG…QCHECQNEMC (115 aa)). The segment at 540 to 742 (ASNHATAGGQ…MLCYSDDMDD (203 aa)) is disordered. Positions 578-587 (YDKKDREGSH) are enriched in basic and acidic residues. Residues 614 to 626 (GELEEDEDSDDAS) are compositionally biased toward acidic residues. Polar residues predominate over residues 692-703 (QSANGNHSTTAT).

The protein belongs to the HHV-1 ICP27 protein family. As to quaternary structure, self-associates and forms high-molecular-mass complexes. Interacts with host DDX39A and DDX39B; these interactions are required for UL69 function in mRNA export. Interacts with host SUPT6H, EIF4A1 and PABPC1. In terms of processing, phosphorylated by UL97 and host CDK1, CDK7 and CD9. Phosphorylation by CDKs impacts on UL69 nuclear localization and activity.

It localises to the virion tegument. The protein resides in the virion. It is found in the host nucleus. Its subcellular location is the host cytoplasm. Functionally, immediate early (EI) protein that plays many roles during productive infection including regulation of host cell cycle progression, regulation of viral gene expression or nuclear export of intronless viral RNAs. Acts as a transcriptional transactivator via interaction with the cellular transcription elongation factor SUPT6H and as a nuclear RNA export factor via interaction with UAP56, a component of the cellular mRNA export machinery. The chain is mRNA export factor ICP27 homolog from Human cytomegalovirus (strain Merlin) (HHV-5).